Consider the following 243-residue polypeptide: Tegument protein UL14 homolog (243 aa).

It belongs to the alphaherpesvirinae HHV-1 UL14 protein family. Phosphorylated.

The protein resides in the virion tegument. The protein localises to the host cytoplasm. Its subcellular location is the host nucleus. Its function is as follows. Contributes to the nuclear transport of the viral transcriptional activator VP16 homolog during the early phase of infection. Therefore, participates indirectly in the regulation of the immediate-early gene expression. Additionally, seems to be important for efficient nuclear targeting of capsids. In Gallid herpesvirus 2 (strain Chicken/Md5/ATCC VR-987) (GaHV-2), this protein is Tegument protein UL14 homolog (MDV026).